The chain runs to 100 residues: Aspartyl/glutamyl-tRNA(Asn/Gln) amidotransferase subunit C (100 aa).

This sequence belongs to the GatC family. In terms of assembly, heterotrimer of A, B and C subunits.

The catalysed reaction is L-glutamyl-tRNA(Gln) + L-glutamine + ATP + H2O = L-glutaminyl-tRNA(Gln) + L-glutamate + ADP + phosphate + H(+). The enzyme catalyses L-aspartyl-tRNA(Asn) + L-glutamine + ATP + H2O = L-asparaginyl-tRNA(Asn) + L-glutamate + ADP + phosphate + 2 H(+). Functionally, allows the formation of correctly charged Asn-tRNA(Asn) or Gln-tRNA(Gln) through the transamidation of misacylated Asp-tRNA(Asn) or Glu-tRNA(Gln) in organisms which lack either or both of asparaginyl-tRNA or glutaminyl-tRNA synthetases. The reaction takes place in the presence of glutamine and ATP through an activated phospho-Asp-tRNA(Asn) or phospho-Glu-tRNA(Gln). This is Aspartyl/glutamyl-tRNA(Asn/Gln) amidotransferase subunit C from Streptococcus equi subsp. zooepidemicus (strain MGCS10565).